Consider the following 121-residue polypeptide: UPF0102 protein VP0448 (121 aa).

The protein belongs to the UPF0102 family.

The polypeptide is UPF0102 protein VP0448 (Vibrio parahaemolyticus serotype O3:K6 (strain RIMD 2210633)).